The following is a 156-amino-acid chain: RNA polymerase sigma factor SigS (156 aa).

Positions 29-44 (EYYQLLLIKMWQLSQI) match the Polymerase core binding motif. The segment at residues 126-145 (QFEIAEIMSLSLSTIKLIKM) is a DNA-binding region (H-T-H motif).

This sequence belongs to the sigma-70 factor family.

Its function is as follows. Sigma factors are initiation factors that promote the attachment of RNA polymerase to specific initiation sites and are then released. Sigma-S contributes to the protection against external stress, thus playing a role in cellular fitness and survival. This chain is RNA polymerase sigma factor SigS (sigS), found in Staphylococcus aureus (strain NCTC 8325 / PS 47).